Consider the following 103-residue polypeptide: Potassium voltage-gated channel subfamily E member 3 (103 aa).

N-linked (GlcNAc...) asparagine glycosylation is found at Asn-5, Asn-22, and Asn-41. The segment at 30–52 is disordered; that stretch reads LCRPGPGPGPDNQTEDRRASLPG. A helical membrane pass occupies residues 57 to 77; it reads SYMYILFVMFLFAVTVGSLIL. Residues 68–79 form an interaction with KCNQ1 region; the sequence is FAVTVGSLILGY. Residues 78-103 are Cytoplasmic-facing; that stretch reads GYTRSRKVDKRSDPYHVYIKNRVSMI.

Belongs to the potassium channel KCNE family. Interacts with KCNB1. Interacts with KCNC2. Associates with KCNC4/Kv3.4. Interacts with KCNQ1; associates with a KCNQ1:KCNE3 stoichiometry of 4:4; produces a current with nearly instantaneous activation with a linear current-voltage relationship and alters membrane raft localization; affects KCNQ1 structure and gating properties.

Its subcellular location is the cell membrane. It is found in the cytoplasm. The protein localises to the perikaryon. It localises to the cell projection. The protein resides in the dendrite. Its subcellular location is the membrane raft. Ancillary protein that functions as a regulatory subunit of the voltage-gated potassium (Kv) channel complex composed of pore-forming and potassium-conducting alpha subunits and of regulatory beta subunits. KCNE3 beta subunit modulates the gating kinetics and enhances stability of the channel complex. Alters the gating of the delayed rectifier Kv channel containing KCNB1 alpha subunit. Associates with KCNC4/Kv3.4 alpha subunit to form the subthreshold Kv channel in skeletal muscle and to establish the resting membrane potential (RMP) in muscle cells. Association with KCNQ1/KCLQT1 alpha subunit may form the intestinal cAMP-stimulated potassium channel involved in chloride secretion that produces a current with nearly instantaneous activation with a linear current-voltage relationship. The sequence is that of Potassium voltage-gated channel subfamily E member 3 from Mus musculus (Mouse).